Consider the following 662-residue polypeptide: Transketolase (662 aa).

A substrate-binding site is contributed by His28. Thiamine diphosphate contacts are provided by residues His68 and 115–117; that span reads GPL. Asp156 is a Mg(2+) binding site. The thiamine diphosphate site is built by Gly157 and Asn186. The Mg(2+) site is built by Asn186 and Ile188. Substrate contacts are provided by His261, Arg356, and Ser383. His261 contributes to the thiamine diphosphate binding site. Residue Glu410 is the Proton donor of the active site. Phe436 is a binding site for thiamine diphosphate. Positions 460, 468, and 519 each coordinate substrate.

The protein belongs to the transketolase family. Homodimer. Requires Mg(2+) as cofactor. Ca(2+) is required as a cofactor. It depends on Mn(2+) as a cofactor. The cofactor is Co(2+). Thiamine diphosphate serves as cofactor.

It carries out the reaction D-sedoheptulose 7-phosphate + D-glyceraldehyde 3-phosphate = aldehydo-D-ribose 5-phosphate + D-xylulose 5-phosphate. Its pathway is carbohydrate biosynthesis; Calvin cycle. It participates in carbohydrate degradation; pentose phosphate pathway. In terms of biological role, catalyzes the transfer of a two-carbon ketol group from a ketose donor to an aldose acceptor, via a covalent intermediate with the cofactor thiamine pyrophosphate. This Staphylococcus aureus (strain MRSA252) protein is Transketolase (tkt).